Here is a 565-residue protein sequence, read N- to C-terminus: Sulfite reductase [NADPH] hemoprotein beta-component (565 aa).

[4Fe-4S] cluster-binding residues include C429, C435, C474, and C478. C478 lines the siroheme pocket.

This sequence belongs to the nitrite and sulfite reductase 4Fe-4S domain family. As to quaternary structure, alpha(8)-beta(8). The alpha component is a flavoprotein, the beta component is a hemoprotein. It depends on siroheme as a cofactor. The cofactor is [4Fe-4S] cluster.

The enzyme catalyses hydrogen sulfide + 3 NADP(+) + 3 H2O = sulfite + 3 NADPH + 4 H(+). The protein operates within sulfur metabolism; hydrogen sulfide biosynthesis; hydrogen sulfide from sulfite (NADPH route): step 1/1. Component of the sulfite reductase complex that catalyzes the 6-electron reduction of sulfite to sulfide. This is one of several activities required for the biosynthesis of L-cysteine from sulfate. The sequence is that of Sulfite reductase [NADPH] hemoprotein beta-component from Pseudoalteromonas translucida (strain TAC 125).